Here is a 517-residue protein sequence, read N- to C-terminus: Anthranilate--CoA ligase (517 aa).

161–172 (LQYTSGSTGAPK) contacts AMP.

It belongs to the ATP-dependent AMP-binding enzyme family. As to quaternary structure, monomer.

The catalysed reaction is anthranilate + ATP + CoA = anthraniloyl-CoA + AMP + diphosphate. In terms of biological role, catalyzes the formation of anthraniloyl-CoA, which is the priming step for entry into the Pseudomonas quinolone signal (PQS) biosynthetic pathway. Also active on a variety of aromatic substrates, including benzoate and chloro and fluoro derivatives of anthranilate. This is Anthranilate--CoA ligase (pqsA) from Pseudomonas aeruginosa (strain ATCC 15692 / DSM 22644 / CIP 104116 / JCM 14847 / LMG 12228 / 1C / PRS 101 / PAO1).